Reading from the N-terminus, the 135-residue chain is Bacilliredoxin CHU_0972 (135 aa).

It belongs to the bacilliredoxin family.

The polypeptide is Bacilliredoxin CHU_0972 (Cytophaga hutchinsonii (strain ATCC 33406 / DSM 1761 / CIP 103989 / NBRC 15051 / NCIMB 9469 / D465)).